The primary structure comprises 436 residues: GTPase Obg (436 aa).

The 159-residue stretch at 2 to 160 (SMFLDTAKIQ…RELLLELKVL (159 aa)) folds into the Obg domain. An OBG-type G domain is found at 161–338 (ADVGLVGFPS…LLDATAELLD (178 aa)). GTP-binding positions include 167-174 (GFPSVGKS), 192-196 (FTTIV), 214-217 (DLPG), 284-287 (NKMD), and 319-321 (SSL). Residues Ser174 and Thr194 each coordinate Mg(2+). The region spanning 358-436 (GFDEEAPAFE…IGKFEFEFVD (79 aa)) is the OCT domain.

This sequence belongs to the TRAFAC class OBG-HflX-like GTPase superfamily. OBG GTPase family. In terms of assembly, monomer. Mg(2+) is required as a cofactor.

Its subcellular location is the cytoplasm. Functionally, an essential GTPase which binds GTP, GDP and possibly (p)ppGpp with moderate affinity, with high nucleotide exchange rates and a fairly low GTP hydrolysis rate. Plays a role in control of the cell cycle, stress response, ribosome biogenesis and in those bacteria that undergo differentiation, in morphogenesis control. The sequence is that of GTPase Obg from Streptococcus gordonii (strain Challis / ATCC 35105 / BCRC 15272 / CH1 / DL1 / V288).